The sequence spans 204 residues: Translation initiation factor IF-3 (204 aa).

The tract at residues 169 to 204 (VPKAAPKRDSGRSESAQEAPTARSAEASRPEAPANA) is disordered.

This sequence belongs to the IF-3 family. Monomer.

The protein resides in the cytoplasm. Functionally, IF-3 binds to the 30S ribosomal subunit and shifts the equilibrium between 70S ribosomes and their 50S and 30S subunits in favor of the free subunits, thus enhancing the availability of 30S subunits on which protein synthesis initiation begins. In Deinococcus geothermalis (strain DSM 11300 / CIP 105573 / AG-3a), this protein is Translation initiation factor IF-3.